Reading from the N-terminus, the 324-residue chain is Olfactory receptor 6K2 (324 aa).

The Extracellular portion of the chain corresponds to 1 to 25; sequence MESPNRTTIQEFIFSAFPYSWVKSV. Asn5 carries N-linked (GlcNAc...) asparagine glycosylation. A helical transmembrane segment spans residues 26 to 46; it reads VCFVPLLFIYAFIVVGNLVII. Residues 47 to 54 lie on the Cytoplasmic side of the membrane; the sequence is TVVQLNTH. The chain crosses the membrane as a helical span at residues 55–75; that stretch reads LHTPMYTFISALSFLEIWYTT. Residues 76-98 are Extracellular-facing; that stretch reads ATIPKMLSSLLSERSISFNGCLL. A disulfide bond links Cys96 and Cys188. The chain crosses the membrane as a helical span at residues 99–119; sequence QMYFFHSTGICEVCLLTVMAF. The Cytoplasmic portion of the chain corresponds to 120–138; sequence DHYLAICSPLHYPSIMTPK. A helical membrane pass occupies residues 139–159; sequence LCTQLTLSCCVCGFITPLPEI. The Extracellular portion of the chain corresponds to 160–198; the sequence is AWISTLPFCGSNHLEHIFCDFLPVLRLACTDTRAIVMIQ. A helical transmembrane segment spans residues 199–218; the sequence is VVDVIHAVEIITAVMLIFMS. The Cytoplasmic portion of the chain corresponds to 219–238; sequence YDGIVAVILRIHSAGGRRTA. Residues 239 to 259 traverse the membrane as a helical segment; sequence FSTCVSHFIVFSLFFGSVTLM. Over 260-272 the chain is Extracellular; the sequence is YLRFSATYSLFWD. The helical transmembrane segment at 273 to 293 threads the bilayer; sequence IAIALAFAVLSPFFNPIIYSL. Topologically, residues 294–324 are cytoplasmic; that stretch reads RNKEIKEAIKKHIGQAKIFFSVRPGTSSKIF.

The protein belongs to the G-protein coupled receptor 1 family.

It is found in the cell membrane. Functionally, odorant receptor. The sequence is that of Olfactory receptor 6K2 (OR6K2) from Homo sapiens (Human).